We begin with the raw amino-acid sequence, 1171 residues long: Pesticidal crystal protein Cry1Ea (1171 aa).

The interval E1094–Y1124 is disordered. Residues V1103–P1117 are compositionally biased toward basic and acidic residues.

Belongs to the delta endotoxin family.

In terms of biological role, promotes colloidosmotic lysis by binding to the midgut epithelial cells of many lepidopteran larvae including Spodoptera species. In Bacillus thuringiensis subsp. kenyae, this protein is Pesticidal crystal protein Cry1Ea (cry1Ea).